Reading from the N-terminus, the 262-residue chain is MDYTTQSDLSLSKSMQNIKLKIAYDGQAYFGWQKTPAGPSVEKTLQNSLEQILQHTISLQAASRTDKGVHARGQIVNFLTTKSITDLQKFILSLNSLLPTDLRILSAEKMPSTFHPTLNCVAKEYCYYICYDFVQLPEYRPYSWHCPFPLMLGKMTQAISVLIGEHDFSAFCNFKKNVNYTDYIRRVQAIHLEVLNHKRLCIRIKGNHFLYKMVRNIVGTLIYIGKGKLMVEDIPSILQSQDRKMAGVTAPAHGLFLQTVLY.

Aspartate 66 functions as the Nucleophile in the catalytic mechanism. Tyrosine 125 provides a ligand contact to substrate.

Belongs to the tRNA pseudouridine synthase TruA family. In terms of assembly, homodimer.

The catalysed reaction is uridine(38/39/40) in tRNA = pseudouridine(38/39/40) in tRNA. Functionally, formation of pseudouridine at positions 38, 39 and 40 in the anticodon stem and loop of transfer RNAs. This chain is tRNA pseudouridine synthase A 2, found in Protochlamydia amoebophila (strain UWE25).